The sequence spans 82 residues: Sec-independent protein translocase protein TatA (82 aa).

A helical membrane pass occupies residues 1 to 21 (MLGFGPFELILIVVIIALLFG). Basic and acidic residues predominate over residues 36–47 (IKEFKQEMHEPS). The tract at residues 36–82 (IKEFKQEMHEPSPPRPQVTDIPSQRLDPVTGAPVSTESTVPASDRRS) is disordered.

The protein belongs to the TatA/E family. Forms a complex with TatC.

It localises to the cell membrane. Functionally, part of the twin-arginine translocation (Tat) system that transports large folded proteins containing a characteristic twin-arginine motif in their signal peptide across membranes. TatA could form the protein-conducting channel of the Tat system. The protein is Sec-independent protein translocase protein TatA of Deinococcus deserti (strain DSM 17065 / CIP 109153 / LMG 22923 / VCD115).